We begin with the raw amino-acid sequence, 258 residues long: Imidazole glycerol phosphate synthase subunit HisF (258 aa).

Catalysis depends on residues aspartate 11 and aspartate 130.

Belongs to the HisA/HisF family. As to quaternary structure, heterodimer of HisH and HisF.

The protein localises to the cytoplasm. It carries out the reaction 5-[(5-phospho-1-deoxy-D-ribulos-1-ylimino)methylamino]-1-(5-phospho-beta-D-ribosyl)imidazole-4-carboxamide + L-glutamine = D-erythro-1-(imidazol-4-yl)glycerol 3-phosphate + 5-amino-1-(5-phospho-beta-D-ribosyl)imidazole-4-carboxamide + L-glutamate + H(+). The protein operates within amino-acid biosynthesis; L-histidine biosynthesis; L-histidine from 5-phospho-alpha-D-ribose 1-diphosphate: step 5/9. Functionally, IGPS catalyzes the conversion of PRFAR and glutamine to IGP, AICAR and glutamate. The HisF subunit catalyzes the cyclization activity that produces IGP and AICAR from PRFAR using the ammonia provided by the HisH subunit. This Xanthomonas campestris pv. campestris (strain B100) protein is Imidazole glycerol phosphate synthase subunit HisF.